A 366-amino-acid polypeptide reads, in one-letter code: 3-dehydroquinate synthase (366 aa).

NAD(+) contacts are provided by residues 75–80, 109–113, 133–134, lysine 146, lysine 155, and 173–176; these read DGEQYK, GVIGD, TT, and CLST. Zn(2+)-binding residues include glutamate 188, histidine 251, and histidine 268.

Belongs to the sugar phosphate cyclases superfamily. Dehydroquinate synthase family. NAD(+) is required as a cofactor. It depends on Co(2+) as a cofactor. Requires Zn(2+) as cofactor.

Its subcellular location is the cytoplasm. The catalysed reaction is 7-phospho-2-dehydro-3-deoxy-D-arabino-heptonate = 3-dehydroquinate + phosphate. It functions in the pathway metabolic intermediate biosynthesis; chorismate biosynthesis; chorismate from D-erythrose 4-phosphate and phosphoenolpyruvate: step 2/7. Catalyzes the conversion of 3-deoxy-D-arabino-heptulosonate 7-phosphate (DAHP) to dehydroquinate (DHQ). This chain is 3-dehydroquinate synthase, found in Vibrio parahaemolyticus serotype O3:K6 (strain RIMD 2210633).